The sequence spans 591 residues: BRCA1-associated protein (591 aa).

Serine 52 bears the Phosphoserine mark. Residues 82-93 (DEVRDTVEEKKP) are compositionally biased toward basic and acidic residues. The disordered stretch occupies residues 82 to 124 (DEVRDTVEEKKPSAAPVSAQRSREQSESVNTAPESPSKQLPDQ). Residues 108 to 124 (ESVNTAPESPSKQLPDQ) show a composition bias toward polar residues. Phosphoserine is present on residues serine 116 and serine 118. The RING-type zinc finger occupies 263-303 (CTVCLERMDESVNGILTTLCNHSFHSQCLQRWDDTTCPVCR). Residues 300–392 (PVCRYCQTPE…GKIVQYECEG (93 aa)) form a UBP-type; degenerate zinc finger. Zn(2+) contacts are provided by cysteine 316, cysteine 319, cysteine 328, cysteine 331, cysteine 336, histidine 343, histidine 347, and histidine 353. A coiled-coil region spans residues 430-536 (EKDTAEEINN…EIQEQLRDVM (107 aa)). The segment at 563 to 591 (IAMASAPNPPSSGAGGKLQSRKGRSKRGK) is disordered. Over residues 581 to 591 (QSRKGRSKRGK) the composition is skewed to basic residues.

In terms of assembly, interacts with the nuclear localization signal of BRCA1 and with the N-terminal of KSR1. The C-terminal portion of BRCA1 interacts with DDB1. In terms of tissue distribution, isoform 2 is highly expressed in testis, lower levels in brain, heart, lung, stomach, colon, uterus, liver and kidney. Isoform 1 is only expressed in the testis. Isoform 2 is predominant over isoform 1 in both fetal and adult testis.

Its subcellular location is the cytoplasm. It catalyses the reaction S-ubiquitinyl-[E2 ubiquitin-conjugating enzyme]-L-cysteine + [acceptor protein]-L-lysine = [E2 ubiquitin-conjugating enzyme]-L-cysteine + N(6)-ubiquitinyl-[acceptor protein]-L-lysine.. It functions in the pathway protein modification; protein ubiquitination. Its function is as follows. Negatively regulates MAP kinase activation by limiting the formation of Raf/MEK complexes probably by inactivation of the KSR1 scaffold protein. Also acts as a Ras responsive E3 ubiquitin ligase that, on activation of Ras, is modified by auto-polyubiquitination resulting in the release of inhibition of Raf/MEK complex formation. May also act as a cytoplasmic retention protein with a role in regulating nuclear transport. The protein is BRCA1-associated protein of Mus musculus (Mouse).